Consider the following 324-residue polypeptide: Appendage-associated protein (324 aa).

The first 32 residues, 1–32, serve as a signal peptide directing secretion; it reads MGCPVSRGGSPGCGRRIAEELRLAEDARLRLA. A coiled-coil region spans residues 195-255; it reads IAQAKEIAQA…AADKLQALGK (61 aa).

Its subcellular location is the secreted. Associates with actin filament appendages that are formed in the inclusion appendages of the parasitophorous vacuole during infection of the host erythrocyte. In Anaplasma marginale (strain Florida), this protein is Appendage-associated protein (aaaP1).